A 308-amino-acid chain; its full sequence is UDP-N-acetylenolpyruvoylglucosamine reductase (308 aa).

In terms of domain architecture, FAD-binding PCMH-type spans 22–185; sequence RVGGPADWLF…TEATFRAEAG (164 aa). Arginine 165 is a catalytic residue. A compositionally biased stretch (basic and acidic residues) spans 197–211; sequence QIARRDSSQPTKERS. Positions 197–228 are disordered; sequence QIARRDSSQPTKERSAGSTFRNPAGFSSTGRA. Positions 212-226 are enriched in polar residues; sequence AGSTFRNPAGFSSTG. Serine 214 functions as the Proton donor in the catalytic mechanism. Residue glutamate 296 is part of the active site.

The protein belongs to the MurB family. FAD serves as cofactor.

It is found in the cytoplasm. The catalysed reaction is UDP-N-acetyl-alpha-D-muramate + NADP(+) = UDP-N-acetyl-3-O-(1-carboxyvinyl)-alpha-D-glucosamine + NADPH + H(+). It participates in cell wall biogenesis; peptidoglycan biosynthesis. Functionally, cell wall formation. This Cereibacter sphaeroides (strain ATCC 17029 / ATH 2.4.9) (Rhodobacter sphaeroides) protein is UDP-N-acetylenolpyruvoylglucosamine reductase.